The sequence spans 115 residues: Large ribosomal subunit protein uL22c (115 aa).

Belongs to the universal ribosomal protein uL22 family. In terms of assembly, part of the 50S ribosomal subunit.

The protein resides in the plastid. It is found in the chloroplast. In terms of biological role, this protein binds specifically to 23S rRNA. The globular domain of the protein is located near the polypeptide exit tunnel on the outside of the subunit, while an extended beta-hairpin is found that lines the wall of the exit tunnel in the center of the 70S ribosome. This Phaeodactylum tricornutum (strain CCAP 1055/1) protein is Large ribosomal subunit protein uL22c (rpl22).